Reading from the N-terminus, the 166-residue chain is Endoribonuclease YbeY (166 aa).

Residues histidine 126, histidine 130, and histidine 136 each contribute to the Zn(2+) site.

This sequence belongs to the endoribonuclease YbeY family. Zn(2+) is required as a cofactor.

Its subcellular location is the cytoplasm. In terms of biological role, single strand-specific metallo-endoribonuclease involved in late-stage 70S ribosome quality control and in maturation of the 3' terminus of the 16S rRNA. The protein is Endoribonuclease YbeY of Laribacter hongkongensis (strain HLHK9).